The chain runs to 651 residues: BTB/POZ domain-containing protein At3g44820 (651 aa).

In terms of domain architecture, BTB spans 25 to 96; the sequence is SDITVVVDDV…CYGARVDITS (72 aa). Residues 211–509 form the NPH3 domain; sequence DWWYEDISYL…LQVLFFEQMH (299 aa). The tract at residues 611-651 is disordered; sequence DAKNDTVQNSVSSTPRSATADHTLPRSSRHSKHRKSFSFFG. Positions 615 to 627 are enriched in polar residues; that stretch reads DTVQNSVSSTPRS. The segment covering 637–651 has biased composition (basic residues); that stretch reads SSRHSKHRKSFSFFG.

This sequence belongs to the NPH3 family.

Its pathway is protein modification; protein ubiquitination. Its function is as follows. May act as a substrate-specific adapter of an E3 ubiquitin-protein ligase complex (CUL3-RBX1-BTB) which mediates the ubiquitination and subsequent proteasomal degradation of target proteins. The polypeptide is BTB/POZ domain-containing protein At3g44820 (Arabidopsis thaliana (Mouse-ear cress)).